We begin with the raw amino-acid sequence, 286 residues long: Putative WUSCHEL-related homeobox 2 (286 aa).

Positions 1-25 (MAPAVQQQQSGGGGGSTGAAAVGST) are disordered. Residues 23–87 (GSTTRWCPTP…NHKARDRQKL (65 aa)) constitute a DNA-binding region (homeobox; WUS-type).

The protein belongs to the WUS homeobox family.

It is found in the nucleus. Functionally, transcription factor which may be involved in developmental processes. The chain is Putative WUSCHEL-related homeobox 2 (WOX2) from Oryza sativa subsp. japonica (Rice).